The sequence spans 527 residues: BTB/POZ domain-containing protein At4g01160 (527 aa).

The 70-residue stretch at 111-180 folds into the BTB domain; the sequence is NNNTSVLSVQ…MYSNSLSVTA (70 aa). One can recognise a BACK domain in the interval 233–327; it reads VKPLTNAARQ…HMTTDRLKKI (95 aa).

It functions in the pathway protein modification; protein ubiquitination. May act as a substrate-specific adapter of an E3 ubiquitin-protein ligase complex (CUL3-RBX1-BTB) which mediates the ubiquitination and subsequent proteasomal degradation of target proteins. The sequence is that of BTB/POZ domain-containing protein At4g01160 from Arabidopsis thaliana (Mouse-ear cress).